A 938-amino-acid polypeptide reads, in one-letter code: Glutamate receptor ionotropic, NMDA 1 (938 aa).

Positions 1–18 (MSTMHLLTFALLFSCSFA) are cleaved as a signal peptide. Over 19 to 559 (RAACDPKIVN…TLDSFMQPFQ (541 aa)) the chain is Extracellular. N-linked (GlcNAc...) asparagine glycans are attached at residues asparagine 61, asparagine 203, asparagine 239, asparagine 276, asparagine 300, asparagine 350, asparagine 368, asparagine 440, asparagine 471, and asparagine 491. Cysteine 79 and cysteine 308 are joined by a disulfide. 2 disulfides stabilise this stretch: cysteine 420-cysteine 454 and cysteine 436-cysteine 455. 3 residues coordinate glycine: proline 516, threonine 518, and arginine 523. The chain crosses the membrane as a helical span at residues 560–580 (STLWLLVGLSVHVVAVMLYLL). The Cytoplasmic portion of the chain corresponds to 581 to 602 (DRFSPFGRFKVNSEEEEEDALT). The segment at residues 603–624 (LSSAMWFSWGVLLNSGIGEGAP) is an intramembrane region (discontinuously helical). A pore-forming region spans residues 603–624 (LSSAMWFSWGVLLNSGIGEGAP). Over 625–630 (RSFSAR) the chain is Cytoplasmic. A helical transmembrane segment spans residues 631 to 647 (ILGMVWAGFAMIIVASY). Residues 648-812 (TANLAAFLVL…NAPATLTFEN (165 aa)) lie on the Extracellular side of the membrane. The N-linked (GlcNAc...) asparagine glycan is linked to asparagine 674. Glycine-binding residues include serine 688 and aspartate 732. Cysteines 744 and 798 form a disulfide. Residue asparagine 771 is glycosylated (N-linked (GlcNAc...) asparagine). A helical transmembrane segment spans residues 813 to 833 (MAGVFMLVAGGIVAGIFLIFI). Over 834 to 938 (EIAYKRHKDA…LQLCSRHRES (105 aa)) the chain is Cytoplasmic. Residue serine 889 is modified to Phosphoserine; by PKC. The disordered stretch occupies residues 889-938 (SSFKRRRSSKDTSTGGGRGALQNQKDTVLPRRAIEREEGQLQLCSRHRES). Serine 890 bears the Phosphoserine mark. A phosphoserine; by PKC mark is found at serine 896 and serine 897. Residues 916–927 (VLPRRAIEREEG) show a composition bias toward basic and acidic residues.

Belongs to the glutamate-gated ion channel (TC 1.A.10.1) family. NR1/GRIN1 subfamily. In terms of assembly, heterotetramer; the NMDAR subunits are modular and harbor tiered domains that function in concert to regulate opening and closing of the cation-selective ion channel pore. Forms heterotetrameric channels composed of two GluN1/zeta subunits (GRIN1), and two identical GluN2/epsilon subunits (GRIN2A, GRIN2B, GRIN2C or GRIN2D) or GluN3 subunits (GRIN3A or GRIN3B) (in vitro). Can also form heterotetrameric channels that contain at least two GluN1 subunits and at least two different GluN2 subunits (or a combination of one GluN2 and one GluN3 subunits) (in vitro). In vivo, the subunit composition may vary in function of the expression levels of the different subunits. Found in a complex with GRIN2A or GRIN2B, GRIN3A and PPP2CB. Found in a complex with GRIN2A or GRIN2B and GRIN3B. Interacts with SNX27 (via PDZ domain); the interaction is required for recycling to the plasma membrane when endocytosed and prevent degradation in lysosomes. Interacts with DLG4 and MPDZ. Interacts with LRFN1 and LRFN2. Interacts with MYZAP. Found in a complex with DLG4 and PRR7. Found in a complex with GRIN2B and PRR7. Interacts with PRR7; the interaction is reduced following NMDA receptor activity. Post-translationally, NMDA is probably regulated by C-terminal phosphorylation of an isoform of GRIN1 by PKC. Dephosphorylated on Ser-897 probably by protein phosphatase 2A (PPP2CB). Its phosphorylated state is influenced by the formation of the NMDAR-PPP2CB complex and the NMDAR channel activity. In terms of tissue distribution, detected in brain (at protein level). Detected in brain.

The protein localises to the cell membrane. It localises to the postsynaptic cell membrane. It is found in the postsynaptic density membrane. The protein resides in the synaptic cell membrane. The catalysed reaction is Ca(2+)(in) = Ca(2+)(out). It catalyses the reaction Na(+)(in) = Na(+)(out). It carries out the reaction K(+)(in) = K(+)(out). Functionally, component of N-methyl-D-aspartate (NMDA) receptors (NMDARs) that function as heterotetrameric, ligand-gated cation channels with high calcium permeability and voltage-dependent block by Mg(2+). NMDARs participate in synaptic plasticity for learning and memory formation by contributing to the long-term potentiation (LTP). Channel activation requires binding of the neurotransmitter L-glutamate to the GluN2 subunit, glycine or D-serine binding to the GluN1 subunit, plus membrane depolarization to eliminate channel inhibition by Mg(2+). NMDARs mediate simultaneously the potasium efflux and the influx of calcium and sodium. Each GluN2 or GluN3 subunit confers differential attributes to channel properties, including activation, deactivation and desensitization kinetics, pH sensitivity, Ca2(+) permeability, and binding to allosteric modulators. The chain is Glutamate receptor ionotropic, NMDA 1 from Mus musculus (Mouse).